We begin with the raw amino-acid sequence, 446 residues long: Probable glycine dehydrogenase (decarboxylating) subunit 1 (446 aa).

It belongs to the GcvP family. N-terminal subunit subfamily. In terms of assembly, the glycine cleavage system is composed of four proteins: P, T, L and H. In this organism, the P 'protein' is a heterodimer of two subunits.

The catalysed reaction is N(6)-[(R)-lipoyl]-L-lysyl-[glycine-cleavage complex H protein] + glycine + H(+) = N(6)-[(R)-S(8)-aminomethyldihydrolipoyl]-L-lysyl-[glycine-cleavage complex H protein] + CO2. The glycine cleavage system catalyzes the degradation of glycine. The P protein binds the alpha-amino group of glycine through its pyridoxal phosphate cofactor; CO(2) is released and the remaining methylamine moiety is then transferred to the lipoamide cofactor of the H protein. This Coxiella burnetii (strain CbuK_Q154) (Coxiella burnetii (strain Q154)) protein is Probable glycine dehydrogenase (decarboxylating) subunit 1.